The following is a 175-amino-acid chain: ATP-dependent protease subunit HslV (175 aa).

Thr-2 is a catalytic residue. Positions 156, 159, and 162 each coordinate Na(+).

Belongs to the peptidase T1B family. HslV subfamily. A double ring-shaped homohexamer of HslV is capped on each side by a ring-shaped HslU homohexamer. The assembly of the HslU/HslV complex is dependent on binding of ATP.

Its subcellular location is the cytoplasm. The catalysed reaction is ATP-dependent cleavage of peptide bonds with broad specificity.. Its activity is regulated as follows. Allosterically activated by HslU binding. Its function is as follows. Protease subunit of a proteasome-like degradation complex believed to be a general protein degrading machinery. The protein is ATP-dependent protease subunit HslV of Rhizobium etli (strain ATCC 51251 / DSM 11541 / JCM 21823 / NBRC 15573 / CFN 42).